The primary structure comprises 238 residues: Ribonuclease PH (238 aa).

Phosphate contacts are provided by residues arginine 86 and 124–126 (GTR).

It belongs to the RNase PH family. Homohexameric ring arranged as a trimer of dimers.

It catalyses the reaction tRNA(n+1) + phosphate = tRNA(n) + a ribonucleoside 5'-diphosphate. In terms of biological role, phosphorolytic 3'-5' exoribonuclease that plays an important role in tRNA 3'-end maturation. Removes nucleotide residues following the 3'-CCA terminus of tRNAs; can also add nucleotides to the ends of RNA molecules by using nucleoside diphosphates as substrates, but this may not be physiologically important. Probably plays a role in initiation of 16S rRNA degradation (leading to ribosome degradation) during starvation. The chain is Ribonuclease PH from Actinobacillus pleuropneumoniae serotype 5b (strain L20).